Here is a 420-residue protein sequence, read N- to C-terminus: UPF0229 protein LPC_3097 (420 aa).

The interval 83–107 (IAGDRIKRPGGGAGGAGGNASDSGE) is disordered. A compositionally biased stretch (gly residues) spans 91–100 (PGGGAGGAGG).

Belongs to the UPF0229 family.

In Legionella pneumophila (strain Corby), this protein is UPF0229 protein LPC_3097.